A 142-amino-acid polypeptide reads, in one-letter code: Hemoglobin subunit alpha (142 aa).

The region spanning 2–142 (VLSAADKTNV…VSTVLTSKYR (141 aa)) is the Globin domain. At serine 4 the chain carries Phosphoserine. Lysine 8 is modified (N6-succinyllysine). The residue at position 9 (threonine 9) is a Phosphothreonine. Lysine 12 is modified (N6-succinyllysine). An N6-acetyllysine; alternate modification is found at lysine 17. An N6-succinyllysine; alternate modification is found at lysine 17. At tyrosine 25 the chain carries Phosphotyrosine. The residue at position 41 (lysine 41) is an N6-succinyllysine. Serine 50 carries the phosphoserine modification. Residue histidine 59 coordinates O2. Residue histidine 88 participates in heme b binding. Serine 103 carries the post-translational modification Phosphoserine. Threonine 109 is modified (phosphothreonine). Serine 125 and serine 132 each carry phosphoserine. 2 positions are modified to phosphothreonine: threonine 135 and threonine 138. Serine 139 carries the phosphoserine modification.

This sequence belongs to the globin family. As to quaternary structure, heterotetramer of two alpha chains and two beta chains. Red blood cells.

In terms of biological role, involved in oxygen transport from the lung to the various peripheral tissues. Hemopressin acts as an antagonist peptide of the cannabinoid receptor CNR1. Hemopressin-binding efficiently blocks cannabinoid receptor CNR1 and subsequent signaling. The protein is Hemoglobin subunit alpha (HBA) of Equus caballus (Horse).